The sequence spans 541 residues: Chaperonin GroEL (541 aa).

ATP is bound by residues 30 to 33, Lys-51, 87 to 91, Gly-415, 479 to 481, and Asp-495; these read TLGP, DGTTT, and NAA.

This sequence belongs to the chaperonin (HSP60) family. Forms a cylinder of 14 subunits composed of two heptameric rings stacked back-to-back. Interacts with the co-chaperonin GroES.

It localises to the cytoplasm. It carries out the reaction ATP + H2O + a folded polypeptide = ADP + phosphate + an unfolded polypeptide.. In terms of biological role, together with its co-chaperonin GroES, plays an essential role in assisting protein folding. The GroEL-GroES system forms a nano-cage that allows encapsulation of the non-native substrate proteins and provides a physical environment optimized to promote and accelerate protein folding. This Acinetobacter baumannii (strain SDF) protein is Chaperonin GroEL.